Reading from the N-terminus, the 501-residue chain is Phosphatidylinositol 4-kinase type 2-beta (501 aa).

Disordered regions lie at residues 1 to 30 (MMAE…SSEV) and 65 to 122 (TELE…NHFP). Positions 17-27 (GDSTPETNFLS) are enriched in polar residues. Residues 76–88 (ALLLPGPAGSLSP) show a composition bias toward low complexity. Residues 99-117 (NMLSSSSDNLASPGNSSGE) show a composition bias toward polar residues. The region spanning 141–471 (GVFPERISQG…VQMPRVVVER (331 aa)) is the PI3K/PI4K catalytic domain. The interval 147–153 (ISQGSSG) is G-loop. The ATP site is built by S154 and K169. Residues 174–176 (EPY) are important for substrate binding. The interval 182–195 (KWTKYFHKVCCPCC) is important for interaction with membranes. ATP contacts are provided by residues 278–281 (QLFV) and 292–293 (RK). Residues 285 to 293 (HEADFWLRK) are important for interaction with membranes. Residues 322-330 (RNTDRGNDN) are catalytic loop. The interval 362 to 382 (AIDNGLAFPFKHPDEWRAYPF) is activation loop. Residue D364 coordinates ATP. The segment at 377–386 (WRAYPFHWAW) is important for interaction with membranes.

The protein belongs to the PI3/PI4-kinase family. Type II PI4K subfamily.

Its subcellular location is the cytoplasm. The protein localises to the cytosol. It is found in the golgi apparatus membrane. The protein resides in the endoplasmic reticulum membrane. It localises to the cell membrane. Its subcellular location is the early endosome membrane. It carries out the reaction a 1,2-diacyl-sn-glycero-3-phospho-(1D-myo-inositol) + ATP = a 1,2-diacyl-sn-glycero-3-phospho-(1D-myo-inositol 4-phosphate) + ADP + H(+). Functionally, contributes to the overall PI4-kinase activity of the cell. This contribution may be especially significant in plasma membrane, endosomal and Golgi compartments. The phosphorylation of phosphatidylinositol (PI) to PI4P is the first committed step in the generation of phosphatidylinositol 4,5-bisphosphate (PIP2), a precursor of the second messenger inositol 1,4,5-trisphosphate (InsP3). This is Phosphatidylinositol 4-kinase type 2-beta (pi4k2b) from Danio rerio (Zebrafish).